Reading from the N-terminus, the 48-residue chain is uncharacterized protein (48 aa).

This is an uncharacterized protein from Methanocaldococcus jannaschii (strain ATCC 43067 / DSM 2661 / JAL-1 / JCM 10045 / NBRC 100440) (Methanococcus jannaschii).